A 287-amino-acid polypeptide reads, in one-letter code: Probable glucose uptake protein GlcU (287 aa).

Helical transmembrane passes span 7–29 (LIAL…VGGG), 34–56 (IRGT…FAKF), 58–75 (NPTV…WAFG), 114–136 (WSSM…GVAL), 156–178 (MGIL…IFGV), 183–202 (ALFF…SMNH), 209–228 (TALN…FMFY), 233–255 (VGVA…GGIF), and 267–286 (TGIW…LGNL).

Belongs to the GRP transporter (TC 2.A.7.5) family.

It is found in the cell membrane. Involved in the uptake of glucose. This is Probable glucose uptake protein GlcU (glcU) from Staphylococcus aureus (strain COL).